A 277-amino-acid chain; its full sequence is 3-methyl-2-oxobutanoate hydroxymethyltransferase (277 aa).

2 residues coordinate Mg(2+): aspartate 43 and aspartate 82. Residues 43-44 (DS), aspartate 82, and lysine 112 each bind 3-methyl-2-oxobutanoate. A Mg(2+)-binding site is contributed by glutamate 114. Glutamate 181 (proton acceptor) is an active-site residue.

This sequence belongs to the PanB family. As to quaternary structure, homodecamer; pentamer of dimers. The cofactor is Mg(2+).

It is found in the cytoplasm. The catalysed reaction is 3-methyl-2-oxobutanoate + (6R)-5,10-methylene-5,6,7,8-tetrahydrofolate + H2O = 2-dehydropantoate + (6S)-5,6,7,8-tetrahydrofolate. The protein operates within cofactor biosynthesis; (R)-pantothenate biosynthesis; (R)-pantoate from 3-methyl-2-oxobutanoate: step 1/2. In terms of biological role, catalyzes the reversible reaction in which hydroxymethyl group from 5,10-methylenetetrahydrofolate is transferred onto alpha-ketoisovalerate to form ketopantoate. The protein is 3-methyl-2-oxobutanoate hydroxymethyltransferase of Listeria monocytogenes serovar 1/2a (strain ATCC BAA-679 / EGD-e).